Here is a 302-residue protein sequence, read N- to C-terminus: 4-hydroxy-tetrahydrodipicolinate synthase (302 aa).

Threonine 55 is a pyruvate binding site. The active-site Proton donor/acceptor is the tyrosine 144. Lysine 172 acts as the Schiff-base intermediate with substrate in catalysis. Valine 214 contacts pyruvate.

The protein belongs to the DapA family. In terms of assembly, homotetramer; dimer of dimers.

It localises to the cytoplasm. The enzyme catalyses L-aspartate 4-semialdehyde + pyruvate = (2S,4S)-4-hydroxy-2,3,4,5-tetrahydrodipicolinate + H2O + H(+). It functions in the pathway amino-acid biosynthesis; L-lysine biosynthesis via DAP pathway; (S)-tetrahydrodipicolinate from L-aspartate: step 3/4. Catalyzes the condensation of (S)-aspartate-beta-semialdehyde [(S)-ASA] and pyruvate to 4-hydroxy-tetrahydrodipicolinate (HTPA). This is 4-hydroxy-tetrahydrodipicolinate synthase from Synechococcus sp. (strain CC9311).